Reading from the N-terminus, the 359-residue chain is Innexin inx2 (359 aa).

The Cytoplasmic portion of the chain corresponds to 1-22 (MFDVFGSVKGLLKLDSVCIDNN). Residues 23–43 (LFRLHYKATVIILIAFSLLVT) form a helical membrane-spanning segment. The Extracellular segment spans residues 44–109 (SRQYIGDPID…KDEVKYHKYY (66 aa)). A helical transmembrane segment spans residues 110–130 (QWVCFVLFFQAILFYIPRYLW). Residues 131-180 (KTWEGGRIKMLVLDLNSPVVNEQSKADRKKLLVDYFATNLHTQNFYAYRF) lie on the Cytoplasmic side of the membrane. The chain crosses the membrane as a helical span at residues 181–201 (FICEALNFVNVVGQIYFMDLF). At 202–266 (LDGEFTTYGS…VLPLNIVNEK (65 aa)) the chain is on the extracellular side. The helical transmembrane segment at 267 to 287 (IYVFLWFWFVILSVLTGIGLV) threads the bilayer. Over 288–359 (YRLATAMGPQ…AKKLEGKEIV (72 aa)) the chain is Cytoplasmic.

It belongs to the pannexin family. As to expression, widespread expression in embryo, in anterior and posterior row of neural precursors, midline precursors and in epithelial sheet of stomodeum.

The protein localises to the cell membrane. It localises to the cell junction. The protein resides in the gap junction. Its function is as follows. Structural components of the gap junctions. The protein is Innexin inx2 (inx2) of Schistocerca americana (American grasshopper).